The chain runs to 765 residues: MKWSILLLVGCAAAIDVPRQPYAPTGSGKKRLTFNETVVKRAISPSAISVEWISTSEDGDYVYQDQDGSLKIQSIVTNHTQTLVPADKVPEDAYSYWIHPNLSSVLWATNYTKQYRHSYFADYFIQDVQSMKLRPLAPDQSGDIQYAQWTPTGDAIAFVRDNNVFVWTNASTSQITNDGGPDLFNGVPDWIYEEEILGDRFALWFSPDGAYLAFLRFNETGVPTFTVPYYMDNEEIAPPYPRELELRYPKVSQTNPTVELNLLELRTGERTPVPIDAFDAKELIIGEVAWLTGKHDVVAVKAFNRVQDRQKVVAVDVASLRSKTISERDGTDGWLDNLLSMAYIGPIGESKEEYYIDISDQSGWAHLWLFPVAGGEPIALTKGEWEVTNILSIDKPRQLVYFLSTKHHSTERHLYSVSWKTKEITPLVDDTVPAVWSASFSSQGGYYILSYRGPDVPYQDLYAINSTAPLRTITSNAAVLNALKEYTLPNITYFELALPSGETLNVMQRLPVKFSPKKKYPVLFTPYGGPGAQEVSKAWQALDFKAYIASDPELEYITWTVDNRGTGYKGRAFRCQVASRLGELEAADQVFAAQQAAKLPYVDAQHIAIWGWSYGGYLTGKVIETDSGAFSLGVQTAPVSDWRFYDSMYTERYMKTLESNAAGYNASAIRKVAGYKNVRGGVLIQHGTGDDNVHFQNAAALVDTLVGAGVTPEKLQVQWFTDSDHGIRYHGGNVFLYRQLSKRLYEEKKRKEKGEAHQWSKKSVL.

Residues 1–14 (MKWSILLLVGCAAA) form the signal peptide. Asn-35, Asn-78, Asn-101, Asn-110, Asn-169, Asn-218, Asn-465, and Asn-490 each carry an N-linked (GlcNAc...) asparagine glycan. The Charge relay system role is filled by Ser-613. Residue Asn-665 is glycosylated (N-linked (GlcNAc...) asparagine). Active-site charge relay system residues include Asp-690 and His-725.

The protein belongs to the peptidase S9B family.

The protein resides in the secreted. It carries out the reaction Release of an N-terminal dipeptide, Xaa-Yaa-|-Zaa-, from a polypeptide, preferentially when Yaa is Pro, provided Zaa is neither Pro nor hydroxyproline.. In terms of biological role, extracellular dipeptidyl-peptidase which removes N-terminal dipeptides sequentially from polypeptides having unsubstituted N-termini provided that the penultimate residue is proline. Contributes to pathogenicity. This chain is Probable dipeptidyl peptidase 4 (dpp4), found in Aspergillus fumigatus (strain ATCC MYA-4609 / CBS 101355 / FGSC A1100 / Af293) (Neosartorya fumigata).